Reading from the N-terminus, the 317-residue chain is Thiamine thiazole synthase (317 aa).

Residues cysteine 78, glutamate 99–alanine 100, glycine 107, and valine 172 each bind substrate. Cysteine 206 carries the post-translational modification 2,3-didehydroalanine (Cys). Substrate is bound by residues aspartate 208, histidine 223, methionine 275, and arginine 285–glycine 287.

This sequence belongs to the THI4 family. Homooctamer. Fe cation serves as cofactor. During the catalytic reaction, a sulfide is transferred from Cys-206 to a reaction intermediate, generating a dehydroalanine residue.

It localises to the cytoplasm. The protein localises to the nucleus. It carries out the reaction [ADP-thiazole synthase]-L-cysteine + glycine + NAD(+) = [ADP-thiazole synthase]-dehydroalanine + ADP-5-ethyl-4-methylthiazole-2-carboxylate + nicotinamide + 3 H2O + 2 H(+). Involved in biosynthesis of the thiamine precursor thiazole. Catalyzes the conversion of NAD and glycine to adenosine diphosphate 5-(2-hydroxyethyl)-4-methylthiazole-2-carboxylic acid (ADT), an adenylated thiazole intermediate. The reaction includes an iron-dependent sulfide transfer from a conserved cysteine residue of the protein to a thiazole intermediate. The enzyme can only undergo a single turnover, which suggests it is a suicide enzyme. May have additional roles in adaptation to various stress conditions and in DNA damage tolerance. This Yarrowia lipolytica (strain CLIB 122 / E 150) (Yeast) protein is Thiamine thiazole synthase.